The following is a 310-amino-acid chain: Probable manganese-dependent inorganic pyrophosphatase (310 aa).

Positions 9, 13, 15, 75, 97, and 149 each coordinate Mn(2+).

It belongs to the PPase class C family. The cofactor is Mn(2+).

It is found in the cytoplasm. The catalysed reaction is diphosphate + H2O = 2 phosphate + H(+). In Brevibacillus brevis (strain 47 / JCM 6285 / NBRC 100599), this protein is Probable manganese-dependent inorganic pyrophosphatase.